A 298-amino-acid chain; its full sequence is MDTTRLKDFFTGLQSRIVAELEAFDGQPFRTDSWVRPEGGGGISRLIEEGDFFERGGVNFSHVTGKSLPASATAVRPQLAGRSWEAMGVSLVLHPRNPYCPTAHMNVRCFVASKEGEEDVWWFGGGMDMTPYYGQREDVVHFHQTCKDALAPFGDEVYPKYKHWCDEYFFLKHRNEPRGVGGVFFDDLNEGGFERCFELTQAVGNAFTKAYLPVLAKRREMPYDERERDFQAYRRGRYVEFNLVWDRGTLFGLQSGGRTESILMSLPPIVKWRYDWQPEAGSPEAELYEVFLKPQDWA.

Residue Ser-90 participates in substrate binding. The a divalent metal cation site is built by His-94 and His-104. His-104 (proton donor) is an active-site residue. A substrate-binding site is contributed by 106–108; that stretch reads NVR. The a divalent metal cation site is built by His-143 and His-173. The interval 238-273 is important for dimerization; the sequence is YVEFNLVWDRGTLFGLQSGGRTESILMSLPPIVKWR. Residue 256-258 participates in substrate binding; sequence GGR.

It belongs to the aerobic coproporphyrinogen-III oxidase family. Homodimer. The cofactor is a divalent metal cation.

It localises to the cytoplasm. The enzyme catalyses coproporphyrinogen III + O2 + 2 H(+) = protoporphyrinogen IX + 2 CO2 + 2 H2O. Its pathway is porphyrin-containing compound metabolism; protoporphyrin-IX biosynthesis; protoporphyrinogen-IX from coproporphyrinogen-III (O2 route): step 1/1. Functionally, involved in the heme biosynthesis. Catalyzes the aerobic oxidative decarboxylation of propionate groups of rings A and B of coproporphyrinogen-III to yield the vinyl groups in protoporphyrinogen-IX. The sequence is that of Oxygen-dependent coproporphyrinogen-III oxidase from Dechloromonas aromatica (strain RCB).